We begin with the raw amino-acid sequence, 243 residues long: Adenylate kinase 4 (243 aa).

40–45 (GSGKGT) contacts ATP. Positions 60 to 89 (ATGDMLRAAVAAKTPLGVKAKEAMDKGELV) are NMP. AMP contacts are provided by residues Thr61, Arg66, 87–89 (ELV), 115–118 (GFPR), and Gln122. Residues 156 to 193 (GRWIHPSSGRSYHTKFAPPKVPGVDDVTGEPLIQRKDD) are LID. Position 157 (Arg157) interacts with ATP. 2 residues coordinate AMP: Arg190 and Arg201.

It belongs to the adenylate kinase family.

It is found in the cytoplasm. The enzyme catalyses AMP + ATP = 2 ADP. Functionally, catalyzes the reversible transfer of the terminal phosphate group between ATP and AMP. Plays an important role in cellular energy homeostasis and in adenine nucleotide metabolism. This Oryza sativa subsp. japonica (Rice) protein is Adenylate kinase 4 (ADK-B).